Consider the following 212-residue polypeptide: Spore germination lipase LipC (212 aa).

The active-site Nucleophile is the Ser11. Gly50 and Asn82 together coordinate substrate. Active-site residues include Asp186 and His189.

Belongs to the 'GDSL' lipolytic enzyme family.

It is found in the spore coat. In terms of biological role, lipase involved in spore germination. This Bacillus licheniformis (strain ATCC 14580 / DSM 13 / JCM 2505 / CCUG 7422 / NBRC 12200 / NCIMB 9375 / NCTC 10341 / NRRL NRS-1264 / Gibson 46) protein is Spore germination lipase LipC (lipC).